A 200-amino-acid polypeptide reads, in one-letter code: Adenylate kinase (200 aa).

10–15 (GAGKGT) is an ATP binding site. The tract at residues 30–59 (STGDMLRAAVAAGTPVGLEAKAVMESGGLV) is NMP. Residues threonine 31, arginine 36, 57–59 (GLV), 85–88 (GFPR), and glutamine 92 contribute to the AMP site. Positions 126–142 (KRAAETLARGQAVRKDD) are LID. Arginine 127 lines the ATP pocket. Residues arginine 139 and arginine 150 each contribute to the AMP site. Glutamine 178 provides a ligand contact to ATP.

This sequence belongs to the adenylate kinase family. In terms of assembly, monomer.

Its subcellular location is the cytoplasm. The catalysed reaction is AMP + ATP = 2 ADP. It participates in purine metabolism; AMP biosynthesis via salvage pathway; AMP from ADP: step 1/1. Catalyzes the reversible transfer of the terminal phosphate group between ATP and AMP. Plays an important role in cellular energy homeostasis and in adenine nucleotide metabolism. The chain is Adenylate kinase from Methylobacterium radiotolerans (strain ATCC 27329 / DSM 1819 / JCM 2831 / NBRC 15690 / NCIMB 10815 / 0-1).